Here is a 1070-residue protein sequence, read N- to C-terminus: DNA-directed RNA polymerase subunit beta (1070 aa).

The protein belongs to the RNA polymerase beta chain family. In plastids the minimal PEP RNA polymerase catalytic core is composed of four subunits: alpha, beta, beta', and beta''. When a (nuclear-encoded) sigma factor is associated with the core the holoenzyme is formed, which can initiate transcription.

It localises to the plastid. Its subcellular location is the chloroplast. It catalyses the reaction RNA(n) + a ribonucleoside 5'-triphosphate = RNA(n+1) + diphosphate. Functionally, DNA-dependent RNA polymerase catalyzes the transcription of DNA into RNA using the four ribonucleoside triphosphates as substrates. In Liriodendron tulipifera (Tuliptree), this protein is DNA-directed RNA polymerase subunit beta.